A 444-amino-acid polypeptide reads, in one-letter code: Ribulose bisphosphate carboxylase large chain (444 aa).

N6,N6,N6-trimethyllysine is present on Lys7. Substrate contacts are provided by Asn116 and Thr166. Catalysis depends on Lys168, which acts as the Proton acceptor. Lys170 is a substrate binding site. The Mg(2+) site is built by Lys194, Asp196, and Glu197. Lys194 bears the N6-carboxylysine mark. Catalysis depends on His287, which acts as the Proton acceptor. Substrate contacts are provided by Arg288, His320, and Ser372.

The protein belongs to the RuBisCO large chain family. Type I subfamily. Heterohexadecamer of 8 large chains and 8 small chains; disulfide-linked. The disulfide link is formed within the large subunit homodimers. Requires Mg(2+) as cofactor. Post-translationally, the disulfide bond which can form in the large chain dimeric partners within the hexadecamer appears to be associated with oxidative stress and protein turnover.

The protein resides in the plastid. Its subcellular location is the chloroplast. It catalyses the reaction 2 (2R)-3-phosphoglycerate + 2 H(+) = D-ribulose 1,5-bisphosphate + CO2 + H2O. The catalysed reaction is D-ribulose 1,5-bisphosphate + O2 = 2-phosphoglycolate + (2R)-3-phosphoglycerate + 2 H(+). In terms of biological role, ruBisCO catalyzes two reactions: the carboxylation of D-ribulose 1,5-bisphosphate, the primary event in carbon dioxide fixation, as well as the oxidative fragmentation of the pentose substrate in the photorespiration process. Both reactions occur simultaneously and in competition at the same active site. The polypeptide is Ribulose bisphosphate carboxylase large chain (Watsonia angusta).